The following is a 330-amino-acid chain: Adenylate isopentenyltransferase 8, chloroplastic (330 aa).

The N-terminal 35 residues, methionine 1–valine 35, are a transit peptide targeting the chloroplast. Glycine 50–serine 57 lines the ATP pocket.

The protein belongs to the IPP transferase family. As to expression, expressed in roots and in immature seeds with highest expression in the chalazal endosperm.

The protein localises to the plastid. It is found in the chloroplast. It catalyses the reaction dimethylallyl diphosphate + ADP = N(6)-(dimethylallyl)adenosine 5'-diphosphate + diphosphate. The catalysed reaction is dimethylallyl diphosphate + ATP = N(6)-(dimethylallyl)adenosine 5'-triphosphate + diphosphate. Involved in cytokinin biosynthesis. Catalyzes the transfer of an isopentenyl group from dimethylallyl diphosphate (DMAPP) to ATP and ADP. This chain is Adenylate isopentenyltransferase 8, chloroplastic (IPT8), found in Arabidopsis thaliana (Mouse-ear cress).